Here is a 331-residue protein sequence, read N- to C-terminus: Phosphoribosylformylglycinamidine cyclo-ligase (331 aa).

It belongs to the AIR synthase family.

Its subcellular location is the cytoplasm. The catalysed reaction is 2-formamido-N(1)-(5-O-phospho-beta-D-ribosyl)acetamidine + ATP = 5-amino-1-(5-phospho-beta-D-ribosyl)imidazole + ADP + phosphate + H(+). It participates in purine metabolism; IMP biosynthesis via de novo pathway; 5-amino-1-(5-phospho-D-ribosyl)imidazole from N(2)-formyl-N(1)-(5-phospho-D-ribosyl)glycinamide: step 2/2. The sequence is that of Phosphoribosylformylglycinamidine cyclo-ligase from Clostridium botulinum (strain Okra / Type B1).